Consider the following 164-residue polypeptide: Superoxide dismutase [Cu-Zn] 3 (164 aa).

Cu cation is bound by residues histidine 51, histidine 53, and histidine 68. A disulfide bond links cysteine 62 and cysteine 151. Residues histidine 68, histidine 76, histidine 85, and aspartate 88 each contribute to the Zn(2+) site. Histidine 125 provides a ligand contact to Cu cation. The short motif at 162 to 164 is the Peroxisome localization signal element; it reads AKL.

This sequence belongs to the Cu-Zn superoxide dismutase family. As to quaternary structure, homodimer. The cofactor is Cu cation. Requires Zn(2+) as cofactor. In terms of tissue distribution, expressed in leaves (at protein level).

The protein localises to the peroxisome. The catalysed reaction is 2 superoxide + 2 H(+) = H2O2 + O2. Its function is as follows. Destroys radicals which are normally produced within the cells and which are toxic to biological systems. The protein is Superoxide dismutase [Cu-Zn] 3 (CSD3) of Arabidopsis thaliana (Mouse-ear cress).